The chain runs to 56 residues: Cytochrome b-c1 complex subunit 10 (56 aa).

Over 1–16 (MLSRFLGPRYRELARN) the chain is Mitochondrial matrix. The chain crosses the membrane as a helical span at residues 17–38 (WIPTAGMWGTVGAVGLVWATDW). At 39-56 (RLILDWVPYINGKFKKDD) the chain is on the mitochondrial intermembrane side.

This sequence belongs to the UQCR11/QCR10 family. In terms of assembly, component of the ubiquinol-cytochrome c oxidoreductase (cytochrome b-c1 complex, complex III, CIII), a multisubunit enzyme composed of 11 subunits. The complex is composed of 3 respiratory subunits cytochrome b, cytochrome c1 and Rieske protein UQCRFS1, 2 core protein subunits UQCRC1/QCR1 and UQCRC2/QCR2, and 6 low-molecular weight protein subunits UQCRH/QCR6, UQCRB/QCR7, UQCRQ/QCR8, UQCR10/QCR9, UQCR11/QCR10 and subunit 9, the cleavage product of Rieske protein UQCRFS1. The complex exists as an obligatory dimer and forms supercomplexes (SCs) in the inner mitochondrial membrane with NADH-ubiquinone oxidoreductase (complex I, CI) and cytochrome c oxidase (complex IV, CIV), resulting in different assemblies (supercomplex SCI(1)III(2)IV(1) and megacomplex MCI(2)III(2)IV(2)).

It is found in the mitochondrion inner membrane. Its function is as follows. Component of the ubiquinol-cytochrome c oxidoreductase, a multisubunit transmembrane complex that is part of the mitochondrial electron transport chain which drives oxidative phosphorylation. The respiratory chain contains 3 multisubunit complexes succinate dehydrogenase (complex II, CII), ubiquinol-cytochrome c oxidoreductase (cytochrome b-c1 complex, complex III, CIII) and cytochrome c oxidase (complex IV, CIV), that cooperate to transfer electrons derived from NADH and succinate to molecular oxygen, creating an electrochemical gradient over the inner membrane that drives transmembrane transport and the ATP synthase. The cytochrome b-c1 complex catalyzes electron transfer from ubiquinol to cytochrome c, linking this redox reaction to translocation of protons across the mitochondrial inner membrane, with protons being carried across the membrane as hydrogens on the quinol. In the process called Q cycle, 2 protons are consumed from the matrix, 4 protons are released into the intermembrane space and 2 electrons are passed to cytochrome c. QCR10 has a role in CIII assembly and RIP1 stability. The sequence is that of Cytochrome b-c1 complex subunit 10 (Uqcr11) from Mus musculus (Mouse).